A 962-amino-acid chain; its full sequence is Villin-5 (962 aa).

6 Gelsolin-like repeats span residues 29–79 (FKPV…DEAG), 150–190 (VRVK…QERA), 262–305 (GQTD…DQRK), 396–453 (LQVW…EDRA), 534–574 (MQAI…EDQE), and 636–677 (LKAT…KKKP). A disordered region spans residues 749 to 785 (KPKRRVPAYSSRSTVPDKSQPRSRSMTFSPDRARVRG). Over residues 758–776 (SSRSTVPDKSQPRSRSMTF) the composition is skewed to polar residues. S777 and S787 each carry phosphoserine. Residues 845–862 (EKPTPTSQEPPTSPSSSE) show a composition bias toward low complexity. The interval 845–917 (EKPTPTSQEP…LKTDSEDPVS (73 aa)) is disordered. Polar residues predominate over residues 863–875 (ATNQAEAPKSTSE). Position 883 is a phosphoserine (S883). Acidic residues predominate over residues 889–898 (SKEEEAEEES). One can recognise an HP domain in the interval 897–962 (ESSLPTFPYE…NKLKMSVNLF (66 aa)).

The protein belongs to the villin/gelsolin family. Ubiquitous, but expressed preferentially in pollen and stamens.

It localises to the cytoplasm. The protein localises to the cytoskeleton. In terms of biological role, major actin filament stabilizing factor and regulator of actin dynamics. Binds actin and actin filament bundles in a Ca(2+)-insensitive manner, but caps the barbed end of actin filaments and is able to sever them in a calcium-dependent manner. Required for the construction of actin collars in pollen tubes. Acts synergistically with VLN2 (AC O81644) to regulate polarized pollen tube growth. This is Villin-5 from Arabidopsis thaliana (Mouse-ear cress).